Here is a 399-residue protein sequence, read N- to C-terminus: Glucosamine kinase (399 aa).

ATP is bound by residues lysine 98, 149-151 (EYL), and aspartate 156. Aspartate 262 provides a ligand contact to D-glucosamine. Mg(2+) contacts are provided by glutamine 267, aspartate 279, and aspartate 281. The Substrate specificity determinant motif motif lies at 366-381 (QVLREIIYAARHLPRW). A D-glucosamine-binding site is contributed by glutamate 370.

Belongs to the actinobacterial glucosamine kinase family. In terms of assembly, monomer. Mg(2+) is required as a cofactor.

The catalysed reaction is D-glucosamine + ATP = D-glucosamine 6-phosphate + ADP + H(+). Its function is as follows. Catalyzes the ATP-dependent phosphorylation of D-glucosamine (GlcN) to D-glucosamine 6-phosphate. May be involved in the phosphorylation of acquired extracellular GlcN derived from the hydrolysis of chitosan, i.e., in the incorporation of exogenous GlcN into the bacterial GlcNAc metabolism. Is unable to phosphorylate maltose. The sequence is that of Glucosamine kinase from Mycolicibacterium smegmatis (strain ATCC 700084 / mc(2)155) (Mycobacterium smegmatis).